The primary structure comprises 192 residues: Peptidyl-tRNA hydrolase (192 aa).

Position 14 (Tyr14) interacts with tRNA. His19 serves as the catalytic Proton acceptor. Residues Tyr66 and Asn68 each contribute to the tRNA site.

This sequence belongs to the PTH family. As to quaternary structure, monomer.

It localises to the cytoplasm. The enzyme catalyses an N-acyl-L-alpha-aminoacyl-tRNA + H2O = an N-acyl-L-amino acid + a tRNA + H(+). Functionally, hydrolyzes ribosome-free peptidyl-tRNAs (with 1 or more amino acids incorporated), which drop off the ribosome during protein synthesis, or as a result of ribosome stalling. In terms of biological role, catalyzes the release of premature peptidyl moieties from peptidyl-tRNA molecules trapped in stalled 50S ribosomal subunits, and thus maintains levels of free tRNAs and 50S ribosomes. This Coprothermobacter proteolyticus (strain ATCC 35245 / DSM 5265 / OCM 4 / BT) protein is Peptidyl-tRNA hydrolase.